We begin with the raw amino-acid sequence, 489 residues long: 3-octaprenyl-4-hydroxybenzoate carboxy-lyase (489 aa).

Position 172 (N172) interacts with Mn(2+). Residues I175 to R177, R189 to L191, and R194 to G195 contribute to the prenylated FMN site. E238 is a Mn(2+) binding site. D287 (proton donor) is an active-site residue.

It belongs to the UbiD family. In terms of assembly, homohexamer. Prenylated FMN is required as a cofactor. Requires Mn(2+) as cofactor.

It is found in the cell membrane. It carries out the reaction a 4-hydroxy-3-(all-trans-polyprenyl)benzoate + H(+) = a 2-(all-trans-polyprenyl)phenol + CO2. Its pathway is cofactor biosynthesis; ubiquinone biosynthesis. Its function is as follows. Catalyzes the decarboxylation of 3-octaprenyl-4-hydroxy benzoate to 2-octaprenylphenol, an intermediate step in ubiquinone biosynthesis. The polypeptide is 3-octaprenyl-4-hydroxybenzoate carboxy-lyase (Salmonella paratyphi B (strain ATCC BAA-1250 / SPB7)).